An 80-amino-acid chain; its full sequence is Homeobox protein 7 (80 aa).

The segment at residues Ser-8–Ser-67 is a DNA-binding region (homeobox). The disordered stretch occupies residues Arg-60 to Lys-80. The span at Asn-70–Lys-80 shows a compositional bias: low complexity.

It is found in the nucleus. In terms of biological role, putative transcription factor. In Dictyostelium discoideum (Social amoeba), this protein is Homeobox protein 7 (hbx7).